The chain runs to 26 residues: Coenzyme PQQ synthesis protein A (26 aa).

A cross-link (pyrroloquinoline quinone (Glu-Tyr)) is located at residues 16–20 (EINMY).

It belongs to the PqqA family.

It functions in the pathway cofactor biosynthesis; pyrroloquinoline quinone biosynthesis. Its function is as follows. Required for coenzyme pyrroloquinoline quinone (PQQ) biosynthesis. PQQ is probably formed by cross-linking a specific glutamate to a specific tyrosine residue and excising these residues from the peptide. This chain is Coenzyme PQQ synthesis protein A, found in Cereibacter sphaeroides (strain ATCC 17029 / ATH 2.4.9) (Rhodobacter sphaeroides).